The chain runs to 247 residues: Ribosomal RNA large subunit methyltransferase E (247 aa).

Residues 1–21 (MKKTTKKTAGGYGGSGSHKLY) form a disordered region. The S-adenosyl-L-methionine site is built by Gly-88, Trp-90, Asp-111, Asp-127, and Asp-151. Residue Lys-191 is the Proton acceptor of the active site.

The protein belongs to the class I-like SAM-binding methyltransferase superfamily. RNA methyltransferase RlmE family.

The protein resides in the cytoplasm. It carries out the reaction uridine(2552) in 23S rRNA + S-adenosyl-L-methionine = 2'-O-methyluridine(2552) in 23S rRNA + S-adenosyl-L-homocysteine + H(+). Its function is as follows. Specifically methylates the uridine in position 2552 of 23S rRNA at the 2'-O position of the ribose in the fully assembled 50S ribosomal subunit. In Bartonella henselae (strain ATCC 49882 / DSM 28221 / CCUG 30454 / Houston 1) (Rochalimaea henselae), this protein is Ribosomal RNA large subunit methyltransferase E.